A 427-amino-acid polypeptide reads, in one-letter code: Flotillin-1 (427 aa).

A phosphoserine mark is found at S19, S163, and S385.

The protein belongs to the band 7/mec-2 family. Flotillin subfamily. In terms of assembly, heterooligomeric complex of flotillin-1 and flotillin-2 and caveolin-1 and caveolin-2. Interacts with ECPAS.

The protein localises to the cell membrane. Its subcellular location is the endosome. It localises to the membrane. It is found in the caveola. The protein resides in the melanosome. The protein localises to the membrane raft. Functionally, may act as a scaffolding protein within caveolar membranes, functionally participating in formation of caveolae or caveolae-like vesicles. This Bos taurus (Bovine) protein is Flotillin-1 (FLOT1).